The following is a 415-amino-acid chain: Zona pellucida-like domain-containing protein 1 (415 aa).

An N-terminal signal peptide occupies residues Met1–Ala19. At Gln20–Ser372 the chain is on the extracellular side. Residues Tyr43–Asp320 enclose the ZP domain. Cystine bridges form between Cys44–Cys155 and Cys79–Cys104. N-linked (GlcNAc...) asparagine glycosylation is found at Asn121 and Asn164. 2 cysteine pairs are disulfide-bonded: Cys235–Cys296 and Cys255–Cys313. The tract at residues Arg323–Pro360 is disordered. 2 stretches are compositionally biased toward polar residues: residues Thr325–Ala336 and Thr350–Ser359. Residues Ala373 to Leu393 form a helical membrane-spanning segment. Topologically, residues Ala394 to Asp415 are cytoplasmic.

Proteolytically cleaved before the transmembrane segment to yield the secreted form found in the extracellular matrix of the cupula. As to expression, detected in placenta, kidney, lung, pancreas and at very low level in other tissues.

It is found in the cytoplasmic vesicle membrane. The protein localises to the secreted. The protein resides in the extracellular space. Its subcellular location is the extracellular matrix. Its function is as follows. Glycoprotein which is a component of the gelatinous extracellular matrix in the cupulae of the vestibular organ. This is Zona pellucida-like domain-containing protein 1 (ZPLD1) from Homo sapiens (Human).